We begin with the raw amino-acid sequence, 164 residues long: Phospholipase A and acyltransferase 4 (164 aa).

The tract at residues 1 to 40 (MASPHQEPKPGDLIEIFRLGYEHWALYIGDGYVIHLAPPS) is essential for its ability regulate keratinocyte differentiation. At 1 to 134 (MASPHQEPKP…SRCKQVEKAK (134 aa)) the chain is on the cytoplasmic side. In terms of domain architecture, LRAT spans 13–129 (LIEIFRLGYE…LRYGKSRCKQ (117 aa)). Residues His-23 and His-35 contribute to the active site. Cys-113 (acyl-thioester intermediate) is an active-site residue. Residues 124 to 164 (KSRCKQVEKAKVEVGVATALGILVVAGCSFAIRRYQKKATA) form an interaction with TGM1 region. A helical transmembrane segment spans residues 135–155 (VEVGVATALGILVVAGCSFAI). Residues 156–164 (RRYQKKATA) are Lumenal-facing.

This sequence belongs to the H-rev107 family. As to quaternary structure, interacts with TGM1. Widely expressed.

It is found in the membrane. It catalyses the reaction a 1,2-diacyl-sn-glycero-3-phosphocholine + H2O = a 1-acyl-sn-glycero-3-phosphocholine + a fatty acid + H(+). The enzyme catalyses a 1,2-diacyl-sn-glycero-3-phosphocholine + H2O = a 2-acyl-sn-glycero-3-phosphocholine + a fatty acid + H(+). It carries out the reaction 1,2-dihexadecanoyl-sn-glycero-3-phosphocholine + H2O = 1-hexadecanoyl-sn-glycero-3-phosphocholine + hexadecanoate + H(+). The catalysed reaction is 1,2-dihexadecanoyl-sn-glycero-3-phosphocholine + H2O = 2-hexadecanoyl-sn-glycero-3-phosphocholine + hexadecanoate + H(+). It catalyses the reaction 1-hexadecanoyl-2-(9Z-octadecenoyl)-sn-glycero-3-phosphocholine + H2O = 2-(9Z-octadecenoyl)-sn-glycero-3-phosphocholine + hexadecanoate + H(+). The enzyme catalyses 1-hexadecanoyl-2-(9Z-octadecenoyl)-sn-glycero-3-phosphocholine + H2O = 1-hexadecanoyl-sn-glycero-3-phosphocholine + (9Z)-octadecenoate + H(+). It carries out the reaction 1-hexadecanoyl-2-(5Z,8Z,11Z,14Z-eicosatetraenoyl)-sn-glycero-3-phosphocholine + H2O = 2-(5Z,8Z,11Z,14Z)-eicosatetraenoyl-sn-glycero-3-phosphocholine + hexadecanoate + H(+). The catalysed reaction is 1-hexadecanoyl-2-(9Z,12Z-octadecadienoyl)-sn-glycero-3-phosphoethanolamine + H2O = 1-hexadecanoyl-sn-glycero-3-phosphoethanolamine + (9Z,12Z)-octadecadienoate + H(+). It catalyses the reaction 1-hexadecanoyl-2-(9Z,12Z-octadecadienoyl)-sn-glycero-3-phosphoethanolamine + H2O = 2-(9Z,12Z)-octadecadienoyl-sn-glycero-3-phosphoethanolamine + hexadecanoate + H(+). The enzyme catalyses 1-hexadecanoyl-2-(5Z,8Z,11Z,14Z-eicosatetraenoyl)-sn-glycero-3-phosphoethanolamine + H2O = 2-(5Z,8Z,11Z,14Z)-eicosatetraenoyl-sn-glycero-3-phosphoethanolamine + hexadecanoate + H(+). It carries out the reaction 1-hexanoyl-2-acyl-sn-glycero-3-phosphocholine + H2O = hexanoate + a 2-acyl-sn-glycero-3-phosphocholine + H(+). The catalysed reaction is 1,2-diheptadecanoyl-sn-glycero-3-phosphoethanolamine + 1-(9Z-octadecenoyl)-2-hexadecanoyl-sn-glycero-3-phosphocholine = 1,2-diheptadecanoyl-sn-glycero-3-phospho-N-hexadecanoyl-ethanolamine + 1-(9Z-octadecenoyl)-sn-glycero-3-phosphocholine + H(+). It catalyses the reaction 1,2-diheptadecanoyl-sn-glycero-3-phosphoethanolamine + 1-(9Z-octadecenoyl)-2-hexadecanoyl-sn-glycero-3-phosphocholine = 1,2-diheptadecanoyl-sn-glycero-3-phospho-N-(9Z-octadecenoyl)-ethanolamine + 2-hexadecanoyl-sn-glycero-3-phosphocholine + H(+). In terms of biological role, exhibits both phospholipase A1/2 and acyltransferase activities. Shows phospholipase A1 (PLA1) and A2 (PLA2), catalyzing the calcium-independent release of fatty acids from the sn-1 or sn-2 position of glycerophospholipids. For most substrates, PLA1 activity is much higher than PLA2 activity. Shows O-acyltransferase activity, catalyzing the transfer of a fatty acyl group from glycerophospholipid to the hydroxyl group of lysophospholipid. Shows N-acyltransferase activity, catalyzing the calcium-independent transfer of a fatty acyl group at the sn-1 position of phosphatidylcholine (PC) and other glycerophospholipids to the primary amine of phosphatidylethanolamine (PE), forming N-acylphosphatidylethanolamine (NAPE), which serves as precursor for N-acylethanolamines (NAEs). Promotes keratinocyte differentiation via activation of TGM1. The protein is Phospholipase A and acyltransferase 4 of Homo sapiens (Human).